The sequence spans 200 residues: Large ribosomal subunit protein uL4 (200 aa).

The disordered stretch occupies residues 43–71 (RAQKTRAEVSGSGKKPWRQKGTGRARSGD).

The protein belongs to the universal ribosomal protein uL4 family. As to quaternary structure, part of the 50S ribosomal subunit.

One of the primary rRNA binding proteins, this protein initially binds near the 5'-end of the 23S rRNA. It is important during the early stages of 50S assembly. It makes multiple contacts with different domains of the 23S rRNA in the assembled 50S subunit and ribosome. Its function is as follows. Forms part of the polypeptide exit tunnel. This chain is Large ribosomal subunit protein uL4, found in Aggregatibacter actinomycetemcomitans (Actinobacillus actinomycetemcomitans).